Reading from the N-terminus, the 489-residue chain is MPVTFALLLLLGQATADPCYDPQGRPQFCLPPVTQLAAVAASCPQACALSPGNHLGARETCNGSLTLALGGPFLLTSVSLRFCTPGPPALILSAAWASGGPWRLLWHRPAWPGALGGPERVTFHSTPGPKATVAASHLRVEFGGQAGLAAAGLRGRCQCHGHAARCAARARPPRCHCRHHTTGPGCESCRPSHRDWPWRPATPRHPHPCLPCSCNQHARRCRFNSELFRLSGGRSGGVCERCRHHTAGRHCHYCQPGFWRDPSQPIFSRRACRACQCHPIGATGGTCNQTSGQCTCKLGVTGLTCNRCGPGYQQSRSPRMPCQRIPEATTTLATTPGAYSSDPQCQNYCNMSDTRVHMSLRRYCQQDHVLRAQVLASEAAGPAWQRLAVRVLAVYKQRAQPVRRGDQDAWVPRADLTCGCLRLQPGTDYLLLGSAVGDPDPTRLILDRHGLALPWRPRWARPLKRLQQEERAGGCRGVRAPTPSPRPEH.

The N-terminal stretch at 1–16 is a signal peptide; it reads MPVTFALLLLLGQATA. N-linked (GlcNAc...) asparagine glycosylation is present at Asn62. Intrachain disulfides connect Cys157/Cys166, Cys159/Cys175, Cys177/Cys186, Cys189/Cys209, Cys212/Cys221, Cys214/Cys239, Cys242/Cys251, Cys254/Cys272, Cys275/Cys287, Cys277/Cys294, Cys296/Cys305, Cys308/Cys322, Cys345/Cys418, Cys349/Cys420, and Cys364/Cys475. 3 consecutive Laminin EGF-like domains span residues 157-211, 212-274, and 275-324; these read CQCH…PCLP, CSCN…ACRA, and CQCH…PCQR. The region spanning 345–475 is the NTR domain; that stretch reads CQNYCNMSDT…LQQEERAGGC (131 aa). A disordered region spans residues 470–489; it reads ERAGGCRGVRAPTPSPRPEH.

The protein localises to the secreted. Plays a role in neurogenesis. Prevents motor neuron cell body migration out of the neural tube. In Homo sapiens (Human), this protein is Netrin-5 (NTN5).